Reading from the N-terminus, the 364-residue chain is Alanine racemase (364 aa).

The Proton acceptor; specific for D-alanine role is filled by lysine 35. At lysine 35 the chain carries N6-(pyridoxal phosphate)lysine. Arginine 136 is a binding site for substrate. Tyrosine 261 serves as the catalytic Proton acceptor; specific for L-alanine. Methionine 309 lines the substrate pocket.

The protein belongs to the alanine racemase family. The cofactor is pyridoxal 5'-phosphate.

It catalyses the reaction L-alanine = D-alanine. Its pathway is amino-acid biosynthesis; D-alanine biosynthesis; D-alanine from L-alanine: step 1/1. Functionally, catalyzes the interconversion of L-alanine and D-alanine. May also act on other amino acids. The polypeptide is Alanine racemase (alr) (Shewanella amazonensis (strain ATCC BAA-1098 / SB2B)).